The primary structure comprises 547 residues: Probable aquaporin-5 (547 aa).

The span at Met1–Ser13 shows a compositional bias: polar residues. The segment at Met1–Arg208 is disordered. Over Met1–His269 the chain is Cytoplasmic. Positions Pro15–Ser32 are enriched in low complexity. Basic and acidic residues-rich tracts occupy residues Glu152–Thr169 and Asp198–Arg208. A helical transmembrane segment spans residues Phe270–Gly290. The Extracellular portion of the chain corresponds to Thr291–Ser316. N-linked (GlcNAc...) asparagine glycosylation is found at Asn302 and Asn314. A helical transmembrane segment spans residues Lys317–Phe337. The Cytoplasmic segment spans residues Arg338–Ala363. Positions Asn345–Ala347 match the NPA 1 motif. A helical transmembrane segment spans residues Ile364–Leu384. Topologically, residues Phe385 to Ser400 are extracellular. The chain crosses the membrane as a helical span at residues Leu401–Met421. Residues Leu422–Arg428 are Cytoplasmic-facing. The helical transmembrane segment at Ala429–Val449 threads the bilayer. The Extracellular portion of the chain corresponds to Gln450 to His475. Residues Asn457 to Ala459 carry the NPA 2 motif. A helical transmembrane segment spans residues Trp476–Ile496. The Cytoplasmic segment spans residues Lys497–Ser547. Residues Gly510–Ser547 are disordered.

It belongs to the MIP/aquaporin (TC 1.A.8) family.

It localises to the membrane. The catalysed reaction is H2O(in) = H2O(out). Functionally, probable water channel that may have redundant functions with FgAQP3. The protein is Probable aquaporin-5 of Gibberella zeae (strain ATCC MYA-4620 / CBS 123657 / FGSC 9075 / NRRL 31084 / PH-1) (Wheat head blight fungus).